We begin with the raw amino-acid sequence, 493 residues long: DM7 family protein GM11958 (493 aa).

The segment at 434 to 493 (ATKSTDTRDDGMNTADYQSQFPELEQDSEPEPEPEPEPQTEDEGEDEDIEILASLCSGSI) is disordered. Residues 457-483 (LEQDSEPEPEPEPEPQTEDEGEDEDIE) show a composition bias toward acidic residues.

This sequence belongs to the DM7 family.

The chain is DM7 family protein GM11958 from Drosophila sechellia (Fruit fly).